The sequence spans 194 residues: Protein GrpE (194 aa).

Residues 1-39 (MTNHEQDQQDNSELLDDDQVTLESQQAADSGAEAPASDD) are disordered. A compositionally biased stretch (acidic residues) spans 8–20 (QQDNSELLDDDQV).

Belongs to the GrpE family. Homodimer.

Its subcellular location is the cytoplasm. Its function is as follows. Participates actively in the response to hyperosmotic and heat shock by preventing the aggregation of stress-denatured proteins, in association with DnaK and GrpE. It is the nucleotide exchange factor for DnaK and may function as a thermosensor. Unfolded proteins bind initially to DnaJ; upon interaction with the DnaJ-bound protein, DnaK hydrolyzes its bound ATP, resulting in the formation of a stable complex. GrpE releases ADP from DnaK; ATP binding to DnaK triggers the release of the substrate protein, thus completing the reaction cycle. Several rounds of ATP-dependent interactions between DnaJ, DnaK and GrpE are required for fully efficient folding. The chain is Protein GrpE from Saccharophagus degradans (strain 2-40 / ATCC 43961 / DSM 17024).